A 220-amino-acid chain; its full sequence is 7-cyano-7-deazaguanine synthase (220 aa).

10-20 (FSGGQDSTTCL) serves as a coordination point for ATP. 4 residues coordinate Zn(2+): Cys-186, Cys-195, Cys-198, and Cys-201.

The protein belongs to the QueC family. As to quaternary structure, homodimer. Requires Zn(2+) as cofactor.

The catalysed reaction is 7-carboxy-7-deazaguanine + NH4(+) + ATP = 7-cyano-7-deazaguanine + ADP + phosphate + H2O + H(+). The protein operates within purine metabolism; 7-cyano-7-deazaguanine biosynthesis. Catalyzes the ATP-dependent conversion of 7-carboxy-7-deazaguanine (CDG) to 7-cyano-7-deazaguanine (preQ(0)). This Bacillus cereus (strain ATCC 14579 / DSM 31 / CCUG 7414 / JCM 2152 / NBRC 15305 / NCIMB 9373 / NCTC 2599 / NRRL B-3711) protein is 7-cyano-7-deazaguanine synthase.